Reading from the N-terminus, the 293-residue chain is Glutamyl-Q tRNA(Asp) synthetase (293 aa).

L-glutamate is bound by residues 8–12 (RFAPT) and Glu-44. The 'HIGH' region motif lies at 11–21 (PTPSGYLHFGS). Cys-100, Cys-102, Tyr-114, and Cys-118 together coordinate Zn(2+). Residues Tyr-171 and Arg-189 each contribute to the L-glutamate site. Positions 227-231 (KLGKS) match the 'KMSKS' region motif. An ATP-binding site is contributed by Lys-230.

Belongs to the class-I aminoacyl-tRNA synthetase family. GluQ subfamily. It depends on Zn(2+) as a cofactor.

Its function is as follows. Catalyzes the tRNA-independent activation of glutamate in presence of ATP and the subsequent transfer of glutamate onto a tRNA(Asp). Glutamate is transferred on the 2-amino-5-(4,5-dihydroxy-2-cyclopenten-1-yl) moiety of the queuosine in the wobble position of the QUC anticodon. This chain is Glutamyl-Q tRNA(Asp) synthetase, found in Pseudomonas paraeruginosa (strain DSM 24068 / PA7) (Pseudomonas aeruginosa (strain PA7)).